The sequence spans 431 residues: Putative F-box/FBD/LRR-repeat protein At4g26350 (431 aa).

The region spanning 1-47 (MDIISQCPDHLLLRILSFIPTKDVIVTSLLSKRWGSLWRWVPKLEYD) is the F-box domain. 5 LRR repeats span residues 52–78 (NMRF…HLKN), 85–109 (CRTV…EISI), 132–159 (ILTI…HLRC), 160–185 (IGWA…RLAR), and 309–334 (CTQG…TLTN). Residues 348–398 (CWKRPSSVPACLLSSLQAFTWSGYKGRQGDKEVVKYVLRNATGLKKRIFIS) enclose the FBD domain.

The sequence is that of Putative F-box/FBD/LRR-repeat protein At4g26350 from Arabidopsis thaliana (Mouse-ear cress).